Reading from the N-terminus, the 374-residue chain is 2-oxoglutarate-Fe(II) type oxidoreductase ppzC (374 aa).

Positions 111-130 (KDGPFDSGYRGPGTQRVNPT) are disordered. The Fe2OG dioxygenase domain maps to 220-330 (YPDASLEINF…RVSMPFFWGF (111 aa)). Residues H254, D256, and H311 each coordinate Fe cation. R321 lines the 2-oxoglutarate pocket.

It belongs to the iron/ascorbate-dependent oxidoreductase family. Fe(2+) is required as a cofactor.

The enzyme catalyses peramine + 2-oxoglutarate + O2 = 8-hydroxyperamine + succinate + CO2. The protein operates within secondary metabolite biosynthesis. 2-oxoglutarate-Fe(II) type oxidoreductase; part of the gene cluster that mediates the biosynthesis of pyrrolopyrazines, secondary metabolites showing insecticidal activity. Within the pathway, ppzC uses peramine as substrate for hydroxylation to yield the novel analog 8-hydroxyperamine. The single multifunctional NRPS ppzA is sufficient to produce peramine via condensation of 1-pyrroline-5-carboxylate and arginine, N-methylation of the alpha-amino group of arginine and reduction of the thioester and the cyclization to form an iminium ion resulting in release from the peptide synthetase. Deprotonation of this intermediate and oxidation of the pyrroline ring would give rise to peramine. In Epichloe species that produce only peramine, the peramine synthetase gene is not localized in a gene cluster, in contrast to Metarhizium species that contain additional pyrrolopyrazine biosynthesis genes. The 2-oxoglutarate-Fe(II) type oxidoreductase ppzC hydroxylates peramine to yield the newly identified compound 8-hydroxyperamine whereas ppzD converts L-proline into trans-4-hydroxy-L-proline, a precursor of peramine biosynthesis. In Metarhizium rileyi (strain RCEF 4871) (Nomuraea rileyi), this protein is 2-oxoglutarate-Fe(II) type oxidoreductase ppzC.